Reading from the N-terminus, the 462-residue chain is Glycine--tRNA ligase (462 aa).

Substrate contacts are provided by Arg-99 and Glu-174. Residues 206–208 (RNE), 216–221 (FRTREF), 290–291 (EL), and 334–337 (GADR) each bind ATP. 221-225 (FEQME) contributes to the substrate binding site. Position 330–334 (330–334 (EPSLG)) interacts with substrate.

This sequence belongs to the class-II aminoacyl-tRNA synthetase family. In terms of assembly, homodimer.

The protein localises to the cytoplasm. It catalyses the reaction tRNA(Gly) + glycine + ATP = glycyl-tRNA(Gly) + AMP + diphosphate. Functionally, catalyzes the attachment of glycine to tRNA(Gly). The polypeptide is Glycine--tRNA ligase (Macrococcus caseolyticus (strain JCSC5402) (Macrococcoides caseolyticum)).